The primary structure comprises 128 residues: MENVFFFFTFTNVCSLTLDRIKWSTSFTNIFFPDFVITLGIKILSPIRSTLMDSIYMNENLKKSTTCRLSSPNLIYDMDIFGNLSSKERSIIEYNSSSNNVSSSISISKYLGMFNPYSLASLNILTGD.

This is an uncharacterized protein from Vaccinia virus (strain Copenhagen) (VACV).